The primary structure comprises 412 residues: Argininosuccinate synthase (412 aa).

ATP contacts are provided by residues 16–24 (AYSGGLDTS) and A44. L-citrulline contacts are provided by Y96 and S101. ATP is bound at residue G126. Residues T128, N132, and D133 each contribute to the L-aspartate site. N132 contacts L-citrulline. Positions 136, 185, 194, 270, and 282 each coordinate L-citrulline.

Belongs to the argininosuccinate synthase family. Type 1 subfamily. In terms of assembly, homotetramer.

The protein localises to the cytoplasm. The enzyme catalyses L-citrulline + L-aspartate + ATP = 2-(N(omega)-L-arginino)succinate + AMP + diphosphate + H(+). It functions in the pathway amino-acid biosynthesis; L-arginine biosynthesis; L-arginine from L-ornithine and carbamoyl phosphate: step 2/3. The sequence is that of Argininosuccinate synthase from Shewanella baltica (strain OS195).